The sequence spans 287 residues: Ethanolamine ammonia-lyase small subunit (287 aa).

Valine 168, glutamate 189, and cysteine 218 together coordinate adenosylcob(III)alamin.

The protein belongs to the EutC family. In terms of assembly, the basic unit is a heterodimer which dimerizes to form tetramers. The heterotetramers trimerize; 6 large subunits form a core ring with 6 small subunits projecting outwards. Requires adenosylcob(III)alamin as cofactor.

Its subcellular location is the bacterial microcompartment. The catalysed reaction is ethanolamine = acetaldehyde + NH4(+). The protein operates within amine and polyamine degradation; ethanolamine degradation. In terms of biological role, catalyzes the deamination of various vicinal amino-alcohols to oxo compounds. Allows this organism to utilize ethanolamine as the sole source of nitrogen and carbon in the presence of external vitamin B12. The protein is Ethanolamine ammonia-lyase small subunit of Pseudomonas syringae pv. tomato (strain ATCC BAA-871 / DC3000).